The sequence spans 1170 residues: Glucose transport transcription regulator RGT1 (1170 aa).

Polar residues predominate over residues 1–22 (MNELNTVSTNSSDSTKDGGTSN). 2 disordered regions span residues 1 to 47 (MNEL…SRAC) and 77 to 149 (SFDR…SNSV). Positions 47–76 (CDQCRKKKIKCDYKDEKGVCSNCQRNGDRC) form a DNA-binding region, zn(2)-C6 fungal-type. The segment covering 99–108 (RTNEIQDHNN) has biased composition (basic and acidic residues). Residues 113-138 (NTFDNSNNTLNNNTGNSGDNGINSNT) are compositionally biased toward low complexity. The span at 139-149 (VPSTPSRSNSV) shows a compositional bias: polar residues. Phosphoserine is present on residues serine 202, serine 205, serine 208, and serine 229. 5 disordered regions span residues 226 to 254 (VQQS…SASG), 269 to 288 (APTD…IPSL), 293 to 323 (SNSL…LQQG), 384 to 506 (AQQT…HPMT), and 944 to 977 (NYRP…SAAP). Low complexity predominate over residues 239 to 250 (SGNANGSVTGSG). Over residues 271-280 (TDDHNGEQTR) the composition is skewed to basic and acidic residues. Phosphoserine occurs at positions 283 and 284. 3 stretches are compositionally biased toward low complexity: residues 293-302 (SNSLLLGGQP), 309-323 (QQSQ…LQQG), and 385-397 (QQTQ…QVPQ). 2 positions are modified to phosphoserine: serine 410 and serine 414. The segment covering 411-422 (APVSVTLSTDRL) has biased composition (polar residues). The span at 424–444 (GNENNNGEINNNNGSNNSGSS) shows a compositional bias: low complexity. The segment covering 445-457 (KDTSQHSQESVTT) has biased composition (polar residues). The span at 473–488 (STKKRRKSYVSKKTKP) shows a compositional bias: basic residues. A compositionally biased stretch (polar residues) spans 493-506 (SISITSKDSAHPMT). Serine 1130 bears the Phosphoserine mark.

It belongs to the EDS1/RGT1 family. Post-translationally, glucose-induced phosphorylation regulates the DNA-binding activity. Hyperphosphorylation in cells growing on high levels of glucose does prevents DNA-binding and dephosphorylation restores DNA-binding ability.

The protein localises to the nucleus. It is found in the cytoplasm. Functionally, glucose-responsive transcription factor that regulates expression of several glucose transporter (HXT) genes in response to glucose. In the absence of glucose, it functions as a transcriptional repressor, whereas high concentrations of glucose cause it to function as a transcriptional activator. In cells growing on low levels of glucose, has a neutral role, neither repressing nor activating transcription. Binds the consensus binding site sequence 5'-CGGANNA-3', of which multiple copies are present in all HXT promoters regulated by RGT1. The sequence is that of Glucose transport transcription regulator RGT1 (RGT1) from Saccharomyces cerevisiae (strain JAY291) (Baker's yeast).